The primary structure comprises 260 residues: Neurotrophin-3 (260 aa).

An N-terminal signal peptide occupies residues 1–18; it reads MSILFYVMFLPYLCGIHA. Positions 19-141 are excised as a propeptide; the sequence is TNMDKRNLPE…VNNRTSRRKR (123 aa). The N-linked (GlcNAc...) asparagine glycan is linked to N134. 3 disulfides stabilise this stretch: C155-C220, C198-C249, and C208-C251.

It belongs to the NGF-beta family.

The protein resides in the secreted. Seems to promote the survival of visceral and proprioceptive sensory neurons. The sequence is that of Neurotrophin-3 (ntf3) from Xenopus laevis (African clawed frog).